Here is a 167-residue protein sequence, read N- to C-terminus: Menaquinol:cytochrome c reductase iron-sulfur subunit (167 aa).

The Rieske domain occupies 59–158; that stretch reads TKEPQRFDFK…QEVKDGFLYL (100 aa). 4 residues coordinate [2Fe-2S] cluster: Cys-100, His-102, Cys-121, and His-124. A disulfide bridge links Cys-105 with Cys-123.

The protein belongs to the Rieske iron-sulfur protein family. As to quaternary structure, the main subunits of the menaquinol:cytochrome c complex are a Rieske-type iron-sulfur protein (QcrA), a cytochrome b (QcrB) and a cytochrome c (QcrC). It depends on [2Fe-2S] cluster as a cofactor.

Functionally, component of the menaquinol:cytochrome c reductase complex. The Rieske protein is a high potential 2Fe-2S protein. The sequence is that of Menaquinol:cytochrome c reductase iron-sulfur subunit (qcrA) from Bacillus subtilis (strain 168).